A 249-amino-acid polypeptide reads, in one-letter code: tRNA (guanine-N(7)-)-methyltransferase (249 aa).

Residues 1-24 (MHSIPADTGHTPSRAPAGNGSPPA) form a disordered region. Residues Glu81, Glu106, Asp133, and Asp156 each contribute to the S-adenosyl-L-methionine site. The active site involves Asp156. Substrate is bound at residue Lys160. The interval 162–167 (RHNKRR) is interaction with RNA. Residues Asp192 and 227 to 230 (TKFE) contribute to the substrate site.

It belongs to the class I-like SAM-binding methyltransferase superfamily. TrmB family.

The enzyme catalyses guanosine(46) in tRNA + S-adenosyl-L-methionine = N(7)-methylguanosine(46) in tRNA + S-adenosyl-L-homocysteine. It functions in the pathway tRNA modification; N(7)-methylguanine-tRNA biosynthesis. In terms of biological role, catalyzes the formation of N(7)-methylguanine at position 46 (m7G46) in tRNA. The polypeptide is tRNA (guanine-N(7)-)-methyltransferase (Paracidovorax citrulli (strain AAC00-1) (Acidovorax citrulli)).